The primary structure comprises 330 residues: Glycerol-3-phosphate dehydrogenase [NAD(P)+] (330 aa).

Residues tryptophan 11, arginine 31, histidine 32, and lysine 105 each coordinate NADPH. The sn-glycerol 3-phosphate site is built by lysine 105 and glycine 133. Alanine 137 contributes to the NADPH binding site. Sn-glycerol 3-phosphate is bound by residues lysine 188, aspartate 241, serine 251, arginine 252, and asparagine 253. The Proton acceptor role is filled by lysine 188. Arginine 252 contacts NADPH. Leucine 277 and glutamate 279 together coordinate NADPH.

The protein belongs to the NAD-dependent glycerol-3-phosphate dehydrogenase family.

The protein resides in the cytoplasm. The enzyme catalyses sn-glycerol 3-phosphate + NAD(+) = dihydroxyacetone phosphate + NADH + H(+). The catalysed reaction is sn-glycerol 3-phosphate + NADP(+) = dihydroxyacetone phosphate + NADPH + H(+). Its pathway is membrane lipid metabolism; glycerophospholipid metabolism. Catalyzes the reduction of the glycolytic intermediate dihydroxyacetone phosphate (DHAP) to sn-glycerol 3-phosphate (G3P), the key precursor for phospholipid synthesis. This is Glycerol-3-phosphate dehydrogenase [NAD(P)+] from Orientia tsutsugamushi (strain Boryong) (Rickettsia tsutsugamushi).